We begin with the raw amino-acid sequence, 173 residues long: Dual-action ribosomal maturation protein DarP (173 aa).

This sequence belongs to the DarP family.

The protein localises to the cytoplasm. Its function is as follows. Member of a network of 50S ribosomal subunit biogenesis factors which assembles along the 30S-50S interface, preventing incorrect 23S rRNA structures from forming. Promotes peptidyl transferase center (PTC) maturation. The polypeptide is Dual-action ribosomal maturation protein DarP (Pseudomonas putida (strain GB-1)).